Reading from the N-terminus, the 359-residue chain is UPF0283 membrane protein Atu1356 (359 aa).

Residues 1–39 (MKAPTQNDPQTRRPAAFTLETEEAARPSATQKRAPRSFD) are disordered. 2 consecutive transmembrane segments (helical) span residues 75–95 (FGKLGLGALGVLFSLAFGLWA) and 108–128 (WLGYTATIALIVALFAVLALV).

The protein belongs to the UPF0283 family.

It localises to the cell inner membrane. The chain is UPF0283 membrane protein Atu1356 from Agrobacterium fabrum (strain C58 / ATCC 33970) (Agrobacterium tumefaciens (strain C58)).